Consider the following 348-residue polypeptide: Dihydroorotase (348 aa).

Positions 14 and 16 each coordinate Zn(2+). Substrate-binding positions include 16-18 (HLR) and Asn42. 3 residues coordinate Zn(2+): Lys100, His137, and His175. Residue Lys100 is modified to N6-carboxylysine. His137 is a substrate binding site. Leu220 is a binding site for substrate. Residue Asp248 coordinates Zn(2+). Asp248 is a catalytic residue. 2 residues coordinate substrate: His252 and Ala264.

It belongs to the metallo-dependent hydrolases superfamily. DHOase family. Class II DHOase subfamily. In terms of assembly, homodimer. Zn(2+) is required as a cofactor.

It carries out the reaction (S)-dihydroorotate + H2O = N-carbamoyl-L-aspartate + H(+). It functions in the pathway pyrimidine metabolism; UMP biosynthesis via de novo pathway; (S)-dihydroorotate from bicarbonate: step 3/3. Its function is as follows. Catalyzes the reversible cyclization of carbamoyl aspartate to dihydroorotate. This Pseudomonas aeruginosa (strain UCBPP-PA14) protein is Dihydroorotase.